The following is a 560-amino-acid chain: Protein tweety homolog 3 (560 aa).

Topologically, residues methionine 1 to alanine 43 are extracellular. A helical membrane pass occupies residues valine 44 to phenylalanine 64. At tyrosine 65–threonine 87 the chain is on the cytoplasmic side. Residues alanine 88–glycine 108 traverse the membrane as a helical segment. At asparagine 109 to leucine 212 the chain is on the extracellular side. Positions 111 and 114 each coordinate Ca(2+). N-linked (GlcNAc...) asparagine glycans are attached at residues asparagine 127 and asparagine 145. A helical membrane pass occupies residues glycine 213 to isoleucine 233. Residues arginine 234–serine 238 lie on the Cytoplasmic side of the membrane. The helical transmembrane segment at isoleucine 239 to glycine 259 threads the bilayer. Over leucine 260 to glutamate 387 the chain is Extracellular. 2 disulfides stabilise this stretch: cysteine 272/cysteine 382 and cysteine 300/cysteine 367. Residue asparagine 352 is glycosylated (N-linked (GlcNAc...) asparagine). Residues glycine 388–cysteine 408 traverse the membrane as a helical segment. At serine 409–histidine 560 the chain is on the cytoplasmic side. 2 disordered regions span residues glutamine 415–alanine 435 and threonine 486–histidine 560. The span at threonine 539–asparagine 549 shows a compositional bias: polar residues.

The protein belongs to the tweety family. As to quaternary structure, homotetramer; disulfide-linked. Forms cis-homodimers in the presence of Ca(2+).

It localises to the cell membrane. The enzyme catalyses chloride(in) = chloride(out). It carries out the reaction L-glutamate(out) = L-glutamate(in). In terms of biological role, may act as a calcium-independent, swelling-dependent volume-regulated anion channel (VRAC-swell) which plays a pivotal role in the process of regulatory volume decrease (RVD) in the brain through the efflux of anions like chloride and organic osmolytes like glutamate. Probable large-conductance Ca(2+)-activated chloride channel. This is Protein tweety homolog 3 (ttyh3b) from Danio rerio (Zebrafish).